A 119-amino-acid polypeptide reads, in one-letter code: Protein TraH (119 aa).

The segment at 1 to 67 (MSNPNEMTDE…ALDESRRPKA (67 aa)) is disordered. Residues 41–54 (APSAPAEPSHSASP) are compositionally biased toward low complexity.

Functionally, the initiation process of transfer DNA synthesis requires the interaction of at least three plasmid-specific components (TraH, TraI, and TraJ) at the transfer origin resulting in the assembly of a specialized nucleoprotein complex - the relaxosome. In Escherichia coli, this protein is Protein TraH (traH).